The chain runs to 300 residues: Peptidyl-prolyl cis-trans isomerase E (300 aa).

The 79-residue stretch at 6 to 84 (RTIYVGGLAD…RTIRVNLAKP (79 aa)) folds into the RRM domain. The PPIase cyclophilin-type domain occupies 142–298 (FFDIRIGGND…QKIVIYSCGE (157 aa)).

The protein belongs to the cyclophilin-type PPIase family. PPIase E subfamily.

It localises to the nucleus. The enzyme catalyses [protein]-peptidylproline (omega=180) = [protein]-peptidylproline (omega=0). PPIases accelerate the folding of proteins. It catalyzes the cis-trans isomerization of proline imidic peptide bonds in oligopeptides. Combines RNA-binding and PPIase activities. In Drosophila melanogaster (Fruit fly), this protein is Peptidyl-prolyl cis-trans isomerase E (cyp33).